A 262-amino-acid chain; its full sequence is Hydroxyethylthiazole kinase (262 aa).

M50 provides a ligand contact to substrate. Residues R125 and T171 each coordinate ATP. G198 is a binding site for substrate.

Belongs to the Thz kinase family. The cofactor is Mg(2+).

The catalysed reaction is 5-(2-hydroxyethyl)-4-methylthiazole + ATP = 4-methyl-5-(2-phosphooxyethyl)-thiazole + ADP + H(+). The protein operates within cofactor biosynthesis; thiamine diphosphate biosynthesis; 4-methyl-5-(2-phosphoethyl)-thiazole from 5-(2-hydroxyethyl)-4-methylthiazole: step 1/1. Catalyzes the phosphorylation of the hydroxyl group of 4-methyl-5-beta-hydroxyethylthiazole (THZ). The polypeptide is Hydroxyethylthiazole kinase (Escherichia coli O81 (strain ED1a)).